The primary structure comprises 427 residues: GTPase ERA-like, chloroplastic (427 aa).

The transit peptide at 1–39 (MAVSPHISPTLSRYKFFSTSVVENPNFSPYRIYSRRRVT) directs the protein to the chloroplast. One can recognise an Era-type G domain in the interval 128–298 (RSGYVAVVGM…KEWILSKLPF (171 aa)). Residues 136-143 (GMPNVGKS) form a G1 region. 136 to 143 (GMPNVGKS) lines the GTP pocket. Residues 162-166 (QTTRH) are G2. The segment at 183-186 (DTPG) is G3. GTP contacts are provided by residues 183–187 (DTPGV) and 248–251 (NKKD). The segment at 248–251 (NKKD) is G4. Residues 277–279 (VSA) form a G5 region. Residues 329 to 406 (YRNEVPYACQ…FLEVEVKVKE (78 aa)) enclose the KH type-2 domain.

This sequence belongs to the TRAFAC class TrmE-Era-EngA-EngB-Septin-like GTPase superfamily. Era GTPase family.

It localises to the plastid. Its subcellular location is the chloroplast stroma. It is found in the chloroplast nucleoid. Nuclear genome-encoded probable GTPase involved in ribosome biogenesis in chloroplasts. Plays a role in 16S rRNA maturation in plastids and may contribute to the assembly of the small (30S) ribosomal subunit. This Arabidopsis thaliana (Mouse-ear cress) protein is GTPase ERA-like, chloroplastic.